The following is a 393-amino-acid chain: Protein TsgA (393 aa).

The next 12 helical transmembrane spans lie at 11-31 (WISFLSYALTGALVIVTGMVM), 51-71 (FLNAGILISIFLNAWLMEIVP), 78-98 (FGFILMVLAVAGLMFSHSLAL), 101-121 (AAMFVLGLVSGITMSIGTFLI), 134-154 (LLFTDSFFSMAGMIFPMVAAF), 162-182 (WYWVYACIGLVYLAIFILTFG), 206-226 (IGVLFLAVAALCYILGQLGFI), 245-265 (ALVSDFWMSYMFGMWAFSFIL), 273-293 (ILTVLAGMAAVLMYLFITGTQ), 298-318 (WFILTLGFFSSAIYTSIITLG), 332-352 (FILTCGTIGTMLTFVVTGPIV), and 361-381 (LLTANGLYAVVFVMCFALGFV).

It belongs to the major facilitator superfamily. TsgA family.

It localises to the cell inner membrane. This is Protein TsgA from Salmonella gallinarum (strain 287/91 / NCTC 13346).